Consider the following 93-residue polypeptide: UPF0223 protein SAG0995 (93 aa).

Belongs to the UPF0223 family.

The chain is UPF0223 protein SAG0995 from Streptococcus agalactiae serotype V (strain ATCC BAA-611 / 2603 V/R).